The sequence spans 370 residues: Keratin-associated protein 10-7 (370 aa).

The interval Asp-36–Thr-363 is 30 X 5 AA repeats of C-C-X(3). 30 repeat units span residues Cys-41–Pro-45, Cys-46–Ala-50, Cys-67–Thr-71, Cys-89–Ser-93, Cys-99–Ser-103, Cys-109–Val-113, Cys-114–Val-118, Cys-119–Val-123, Cys-135–Ser-139, Cys-145–Ser-149, Cys-155–Ile-159, Cys-160–Val-164, Cys-172–Ser-176, Cys-186–Val-190, Cys-208–Ser-212, Cys-218–Ser-222, Cys-228–Val-232, Cys-233–Val-237, Cys-238–Thr-242, Cys-250–Ala-254, Cys-255–Ser-259, Cys-265–Val-269, Cys-270–Val-274, Cys-275–Val-279, Cys-287–Ser-291, Cys-297–Ser-301, Cys-302–Ser-306, Cys-321–Val-325, Cys-339–Ala-343, and Cys-359–Thr-363.

It belongs to the KRTAP type 10 family. Interacts with hair keratins. Restricted to a narrow region of the hair fiber cuticle, lying approximately 20 cell layers above the apex of the dermal papilla of the hair root; not detected in any other tissues.

Its function is as follows. In the hair cortex, hair keratin intermediate filaments are embedded in an interfilamentous matrix, consisting of hair keratin-associated proteins (KRTAP), which are essential for the formation of a rigid and resistant hair shaft through their extensive disulfide bond cross-linking with abundant cysteine residues of hair keratins. The matrix proteins include the high-sulfur and high-glycine-tyrosine keratins. The chain is Keratin-associated protein 10-7 (KRTAP10-7) from Homo sapiens (Human).